The sequence spans 148 residues: uncharacterized protein (148 aa).

Residues 1–35 (MRCVTRTRNWWRRAARMPRAGSSAWWVAVCKQVCT) form the signal peptide.

Its subcellular location is the secreted. This is an uncharacterized protein from Homo sapiens (Human).